Reading from the N-terminus, the 323-residue chain is Probable proline iminopeptidase (323 aa).

In terms of domain architecture, AB hydrolase-1 spans 37 to 301 (VVLHGGPGSR…VIVDEAGHDA (265 aa)). S114 functions as the Nucleophile in the catalytic mechanism. Residue D271 is part of the active site. The active-site Proton donor is the H299.

The protein belongs to the peptidase S33 family.

The protein localises to the cytoplasm. It catalyses the reaction Release of N-terminal proline from a peptide.. Specifically catalyzes the removal of N-terminal proline residues from peptides. This chain is Probable proline iminopeptidase, found in Streptomyces coelicolor (strain ATCC BAA-471 / A3(2) / M145).